The chain runs to 377 residues: Queuine tRNA-ribosyltransferase (377 aa).

D89 (proton acceptor) is an active-site residue. Substrate contacts are provided by residues 89–93 (DSGGF), D143, Q187, and G214. The tract at residues 245–251 (GVGKPED) is RNA binding. The Nucleophile role is filled by D264. The tract at residues 269–273 (TRNAR) is RNA binding; important for wobble base 34 recognition. 4 residues coordinate Zn(2+): C302, C304, C307, and H333.

Belongs to the queuine tRNA-ribosyltransferase family. As to quaternary structure, homodimer. Within each dimer, one monomer is responsible for RNA recognition and catalysis, while the other monomer binds to the replacement base PreQ1. Requires Zn(2+) as cofactor.

The catalysed reaction is 7-aminomethyl-7-carbaguanine + guanosine(34) in tRNA = 7-aminomethyl-7-carbaguanosine(34) in tRNA + guanine. Its pathway is tRNA modification; tRNA-queuosine biosynthesis. Catalyzes the base-exchange of a guanine (G) residue with the queuine precursor 7-aminomethyl-7-deazaguanine (PreQ1) at position 34 (anticodon wobble position) in tRNAs with GU(N) anticodons (tRNA-Asp, -Asn, -His and -Tyr). Catalysis occurs through a double-displacement mechanism. The nucleophile active site attacks the C1' of nucleotide 34 to detach the guanine base from the RNA, forming a covalent enzyme-RNA intermediate. The proton acceptor active site deprotonates the incoming PreQ1, allowing a nucleophilic attack on the C1' of the ribose to form the product. After dissociation, two additional enzymatic reactions on the tRNA convert PreQ1 to queuine (Q), resulting in the hypermodified nucleoside queuosine (7-(((4,5-cis-dihydroxy-2-cyclopenten-1-yl)amino)methyl)-7-deazaguanosine). The sequence is that of Queuine tRNA-ribosyltransferase from Shewanella denitrificans (strain OS217 / ATCC BAA-1090 / DSM 15013).